The sequence spans 29 residues: Chassatide C10 (29 aa).

A cross-link (cyclopeptide (Gly-Asn)) is located at residues 1–29 (GEYCGESCYLIPCFTPGCYCVSRQCVNKN). 3 cysteine pairs are disulfide-bonded: Cys-4/Cys-18, Cys-8/Cys-20, and Cys-13/Cys-25.

This is a cyclic peptide.

In terms of biological role, probably participates in a plant defense mechanism. Has no activity against bacteria up to a concentration of 80 uM. Has cytotoxic but no hemolytic activity. This chain is Chassatide C10, found in Chassalia chartacea (Chassalia curviflora).